The sequence spans 182 residues: Crossover junction endodeoxyribonuclease RuvC (182 aa).

Residues aspartate 7, glutamate 69, and aspartate 141 contribute to the active site. The Mg(2+) site is built by aspartate 7, glutamate 69, and aspartate 141.

This sequence belongs to the RuvC family. Homodimer which binds Holliday junction (HJ) DNA. The HJ becomes 2-fold symmetrical on binding to RuvC with unstacked arms; it has a different conformation from HJ DNA in complex with RuvA. In the full resolvosome a probable DNA-RuvA(4)-RuvB(12)-RuvC(2) complex forms which resolves the HJ. The cofactor is Mg(2+).

It is found in the cytoplasm. The enzyme catalyses Endonucleolytic cleavage at a junction such as a reciprocal single-stranded crossover between two homologous DNA duplexes (Holliday junction).. Its function is as follows. The RuvA-RuvB-RuvC complex processes Holliday junction (HJ) DNA during genetic recombination and DNA repair. Endonuclease that resolves HJ intermediates. Cleaves cruciform DNA by making single-stranded nicks across the HJ at symmetrical positions within the homologous arms, yielding a 5'-phosphate and a 3'-hydroxyl group; requires a central core of homology in the junction. The consensus cleavage sequence is 5'-(A/T)TT(C/G)-3'. Cleavage occurs on the 3'-side of the TT dinucleotide at the point of strand exchange. HJ branch migration catalyzed by RuvA-RuvB allows RuvC to scan DNA until it finds its consensus sequence, where it cleaves and resolves the cruciform DNA. The polypeptide is Crossover junction endodeoxyribonuclease RuvC (Variovorax paradoxus (strain S110)).